The sequence spans 363 residues: Tetraacyldisaccharide 4'-kinase (363 aa).

ATP is bound at residue 62–69; it reads RVGGTGKT.

It belongs to the LpxK family.

The enzyme catalyses a lipid A disaccharide + ATP = a lipid IVA + ADP + H(+). Its pathway is glycolipid biosynthesis; lipid IV(A) biosynthesis; lipid IV(A) from (3R)-3-hydroxytetradecanoyl-[acyl-carrier-protein] and UDP-N-acetyl-alpha-D-glucosamine: step 6/6. Transfers the gamma-phosphate of ATP to the 4'-position of a tetraacyldisaccharide 1-phosphate intermediate (termed DS-1-P) to form tetraacyldisaccharide 1,4'-bis-phosphate (lipid IVA). This chain is Tetraacyldisaccharide 4'-kinase, found in Polynucleobacter asymbioticus (strain DSM 18221 / CIP 109841 / QLW-P1DMWA-1) (Polynucleobacter necessarius subsp. asymbioticus).